The chain runs to 390 residues: S-adenosylmethionine synthase 3 (390 aa).

E9 provides a ligand contact to Mg(2+). An ATP-binding site is contributed by H15. E43 contributes to the K(+) binding site. The L-methionine site is built by E56 and Q99. ATP-binding positions include 167 to 169, 235 to 238, D246, 252 to 253, A269, K273, and K277; these read DGK, SGRF, and RK. D246 contributes to the L-methionine binding site. K277 is an L-methionine binding site.

It belongs to the AdoMet synthase family. In terms of assembly, homotetramer. Interacts with GRF3. The cofactor is Mn(2+). Mg(2+) serves as cofactor. Requires Co(2+) as cofactor. K(+) is required as a cofactor.

Its subcellular location is the cytoplasm. The enzyme catalyses L-methionine + ATP + H2O = S-adenosyl-L-methionine + phosphate + diphosphate. It functions in the pathway amino-acid biosynthesis; S-adenosyl-L-methionine biosynthesis; S-adenosyl-L-methionine from L-methionine: step 1/1. With respect to regulation, inhibited by 5,5'-dithiobis-2-nitrobenzoic acid (DTNB) and N-ethylmaleimide (NEM) (in vitro). Functionally, catalyzes the formation of S-adenosylmethionine from methionine and ATP. The reaction comprises two steps that are both catalyzed by the same enzyme: formation of S-adenosylmethionine (AdoMet) and triphosphate, and subsequent hydrolysis of the triphosphate. Involved in the biosynthesis of lignin. This is S-adenosylmethionine synthase 3 (METK3) from Arabidopsis thaliana (Mouse-ear cress).